A 113-amino-acid polypeptide reads, in one-letter code: Large ribosomal subunit protein bL19 (113 aa).

This sequence belongs to the bacterial ribosomal protein bL19 family.

This protein is located at the 30S-50S ribosomal subunit interface and may play a role in the structure and function of the aminoacyl-tRNA binding site. This is Large ribosomal subunit protein bL19 from Corynebacterium diphtheriae (strain ATCC 700971 / NCTC 13129 / Biotype gravis).